The following is a 652-amino-acid chain: DNA ligase (652 aa).

Residues 29-33 (DAEYD), 78-79 (SL), and glutamate 107 each bind NAD(+). Lysine 109 (N6-AMP-lysine intermediate) is an active-site residue. 4 residues coordinate NAD(+): arginine 130, glutamate 164, lysine 278, and lysine 302. 4 residues coordinate Zn(2+): cysteine 395, cysteine 398, cysteine 413, and cysteine 418. The region spanning 577-652 (ASDAALTGMT…IKDEAWLESL (76 aa)) is the BRCT domain.

Belongs to the NAD-dependent DNA ligase family. LigA subfamily. Requires Mg(2+) as cofactor. Mn(2+) is required as a cofactor.

It carries out the reaction NAD(+) + (deoxyribonucleotide)n-3'-hydroxyl + 5'-phospho-(deoxyribonucleotide)m = (deoxyribonucleotide)n+m + AMP + beta-nicotinamide D-nucleotide.. Functionally, DNA ligase that catalyzes the formation of phosphodiester linkages between 5'-phosphoryl and 3'-hydroxyl groups in double-stranded DNA using NAD as a coenzyme and as the energy source for the reaction. It is essential for DNA replication and repair of damaged DNA. The protein is DNA ligase of Streptococcus mutans serotype c (strain ATCC 700610 / UA159).